We begin with the raw amino-acid sequence, 300 residues long: Hairy/enhancer-of-split related with YRPW motif protein 1 (300 aa).

The disordered stretch occupies residues 1 to 52; sequence MKRGHDYSSSDSELDENIEVEKESADENGNLSSAAGSMSPSTSSQILARKRR. A compositionally biased stretch (low complexity) spans 32–44; that stretch reads SSAAGSMSPSTSS. The region spanning 48 to 103 is the bHLH domain; it reads ARKRRRGIIEKRRRDRINNSLSELRRLVPSAFEKQGSAKLEKAEILQMTVDHLKML. Residues 121–157 enclose the Orange domain; the sequence is YRSLGFRECLAEVARYLSIIEGMDTTDPLRVRLVSHL. Over residues 199 to 210 the composition is skewed to low complexity; the sequence is AHTSANSTSSST. Disordered regions lie at residues 199-232 and 278-300; these read AHTSANSTSSSTEAHHQNRLPGSPHAETSSLRVP and LSPTTPTPSGKPYRPWGTEIGAF. The short motif at 290–293 is the YRPW motif element; sequence YRPW.

The protein belongs to the HEY family. In terms of assembly, efficient DNA binding requires dimerization with another bHLH protein. Binds DNA in the form of homodimer or more strongly as a heterodimer with hes1/hairy1 or hes4/hairy2b. Also weakly interacts with the bHLH proteins hes2, neurod1 and neurod4/ath3. Interacts (via Orange domain) with ccdc89/boip (via C-terminus).

Its subcellular location is the nucleus. In terms of biological role, downstream effector of Notch signaling. Transcriptional repressor which binds preferentially to the canonical E box sequence 5'-CACGTG-3'. Acts as a suppressor of neurogenesis by antagonizing proneural gene function. Functions during floorplate development. Plays a role in pronephros formation in the inhibition of distal tubule and duct cell fates and the promotion of glomus and proximal tubule formation. The sequence is that of Hairy/enhancer-of-split related with YRPW motif protein 1 (hey1) from Xenopus tropicalis (Western clawed frog).